Consider the following 93-residue polypeptide: MKKTLILLAMVIALVILPFFIDHGGEFGGSDGEAESQIQVVAPHYEPWFQPLYEPASGEIESLLFTLQGSLGAAVIFYILGYSKGRQRRDDRA.

The next 2 membrane-spanning stretches (helical) occupy residues 5–25 (LILLAMVIALVILPFFIDHGG) and 62–82 (SLLFTLQGSLGAAVIFYILGY).

Belongs to the CbiN family. In terms of assembly, forms an energy-coupling factor (ECF) transporter complex composed of an ATP-binding protein (A component, CbiO), a transmembrane protein (T component, CbiQ) and 2 possible substrate-capture proteins (S components, CbiM and CbiN) of unknown stoichimetry.

The protein resides in the cell inner membrane. Its pathway is cofactor biosynthesis; adenosylcobalamin biosynthesis. Functionally, part of the energy-coupling factor (ECF) transporter complex CbiMNOQ involved in cobalt import. This chain is Cobalt transport protein CbiN, found in Citrobacter koseri (strain ATCC BAA-895 / CDC 4225-83 / SGSC4696).